The following is a 68-amino-acid chain: MLCLPVFIILLLLASPAASNPLEKRIQNDLIRAALEDADMENDPRSIIDSVKTFCCSTFNLGICCSKK.

The first 19 residues, 1 to 19, serve as a signal peptide directing secretion; that stretch reads MLCLPVFIILLLLASPAAS. Positions 20 to 53 are excised as a propeptide; it reads NPLEKRIQNDLIRAALEDADMENDPRSIIDSVKT.

It belongs to the conotoxin T superfamily. Post-translationally, contains 2 disulfide bonds that can be either 'C1-C3, C2-C4' or 'C1-C4, C2-C3', since these disulfide connectivities have been observed for conotoxins with cysteine framework V (for examples, see AC P0DQQ7 and AC P81755). As to expression, expressed by the venom duct.

It is found in the secreted. The sequence is that of Conotoxin Ar5.3 from Conus arenatus (Sand-dusted cone).